We begin with the raw amino-acid sequence, 393 residues long: Cysteine protease ATG4B (393 aa).

Residue Met-1 is modified to N-acetylmethionine. Ser-34 is subject to Phosphoserine. The active-site Nucleophile is Cys-74. Cys-189 is subject to S-nitrosocysteine. Active-site residues include Asp-278 and His-280. 2 positions are modified to S-nitrosocysteine: Cys-292 and Cys-301. An intrachain disulfide couples Cys-292 to Cys-361. Phosphoserine occurs at positions 316 and 383. Residues 388 to 391 carry the LIR motif; sequence FEIL. Ser-392 carries the post-translational modification Phosphoserine.

Belongs to the peptidase C54 family. Interacts with PFKP; promoting phosphorylation of ATG4B at Ser-34. Interacts with GBP7. Phosphorylation at Ser-383 and Ser-392 promotes autophagy by increasing protein delipidation activity without affecting proteolytic activation of ATG8 proteins. Phosphorylation at Ser-316 by ULK1 inhibits autophagy by decreasing both proteolytic activation and delipidation activities. Phosphorylation at Ser-316 is dephosphorylated by protein phosphatase 2A (PP2A). Phosphorylation at Ser-34 by AKT2 promotes its hydrolase activity, leading to increased proteolytic activation and delipidation of ATG8 family proteins. Phosphorylation at Ser-34 by AKT1 promotes mitochondrial localization and inhibition of the F1F0-ATP synthase activity, leading to elevation of mitochondrial reactive oxygen species (ROS). Post-translationally, ubiquitinated by RNF5, leading to its degradation by the proteasome. In terms of processing, S-nitrosylation in response to high glucose decreases both proteolytic activation and delipidation activities. O-glycosylated by OGT, leading to increase protease activity, thereby promoting the proteolytic activation of ATG8 family proteins. Post-translationally, forms reversible intrachain disulfide bonds in response to oxidative stress. Forms interchain disulfide bonds, leading to formation of homooligomers in response to oxidation.

It localises to the cytoplasm. The protein localises to the cytosol. Its subcellular location is the cytoplasmic vesicle. It is found in the autophagosome. The protein resides in the endoplasmic reticulum. It localises to the mitochondrion. It catalyses the reaction [protein]-C-terminal L-amino acid-glycyl-phosphatidylethanolamide + H2O = [protein]-C-terminal L-amino acid-glycine + a 1,2-diacyl-sn-glycero-3-phosphoethanolamine. The catalysed reaction is [protein]-C-terminal L-amino acid-glycyl-phosphatidylserine + H2O = [protein]-C-terminal L-amino acid-glycine + a 1,2-diacyl-sn-glycero-3-phospho-L-serine. Its activity is regulated as follows. Inhibited by N-ethylmaleimide. Redox-regulated during autophagy since reducing conditions activate ATG4A whereas an oxidizing environment such as the presence of H(2)O(2) inhibits its activity. The cysteine protease activity compounds is inhibited by styrylquinoline compounds 4-28 and LV-320. Its function is as follows. Cysteine protease that plays a key role in autophagy by mediating both proteolytic activation and delipidation of ATG8 family proteins. Required for canonical autophagy (macroautophagy), non-canonical autophagy as well as for mitophagy. The protease activity is required for proteolytic activation of ATG8 family proteins: cleaves the C-terminal amino acid of ATG8 proteins MAP1LC3A, MAP1LC3B, MAP1LC3C, GABARAPL1, GABARAPL2 and GABARAP, to reveal a C-terminal glycine. Exposure of the glycine at the C-terminus is essential for ATG8 proteins conjugation to phosphatidylethanolamine (PE) and insertion to membranes, which is necessary for autophagy. Protease activity is also required to counteract formation of high-molecular weight conjugates of ATG8 proteins (ATG8ylation): acts as a deubiquitinating-like enzyme that removes ATG8 conjugated to other proteins, such as ATG3. In addition to the protease activity, also mediates delipidation of ATG8 family proteins. Catalyzes delipidation of PE-conjugated forms of ATG8 proteins during macroautophagy. Also involved in non-canonical autophagy, a parallel pathway involving conjugation of ATG8 proteins to single membranes at endolysosomal compartments, by catalyzing delipidation of ATG8 proteins conjugated to phosphatidylserine (PS). Compared to other members of the family (ATG4A, ATG4C or ATG4C), constitutes the major protein for proteolytic activation of ATG8 proteins, while it displays weaker delipidation activity than other ATG4 paralogs. Involved in phagophore growth during mitophagy independently of its protease activity and of ATG8 proteins: acts by regulating ATG9A trafficking to mitochondria and promoting phagophore-endoplasmic reticulum contacts during the lipid transfer phase of mitophagy. This chain is Cysteine protease ATG4B, found in Rattus norvegicus (Rat).